The following is a 231-amino-acid chain: Large ribosomal subunit protein uL1 (231 aa).

This sequence belongs to the universal ribosomal protein uL1 family. As to quaternary structure, part of the 50S ribosomal subunit.

Functionally, binds directly to 23S rRNA. The L1 stalk is quite mobile in the ribosome, and is involved in E site tRNA release. In terms of biological role, protein L1 is also a translational repressor protein, it controls the translation of the L11 operon by binding to its mRNA. This chain is Large ribosomal subunit protein uL1, found in Neisseria meningitidis serogroup C (strain 053442).